Consider the following 129-residue polypeptide: Histone H2A.J (129 aa).

The disordered stretch occupies residues 1-22 (MSGRGKQGGKVRAKAKSRSSRA). Residues K6 and K10 each carry the N6-acetyllysine modification. A compositionally biased stretch (basic residues) spans 7 to 19 (QGGKVRAKAKSRS). K10 bears the N6-lactoyllysine; alternate mark. Position 105 is an N5-methylglutamine (Q105). Residue T121 is modified to Phosphothreonine; by DCAF1.

The protein belongs to the histone H2A family. In terms of assembly, the nucleosome is a histone octamer containing two molecules each of H2A, H2B, H3 and H4 assembled in one H3-H4 heterotetramer and two H2A-H2B heterodimers. The octamer wraps approximately 147 bp of DNA. In terms of processing, glutamine methylation at Gln-105 (H2AQ104me) by FBL is specifically dedicated to polymerase I. It is present at 35S ribosomal DNA locus and impairs binding of the FACT complex. Monoubiquitination of Lys-120 (H2AXK119ub) gives a specific tag for epigenetic transcriptional repression. Following DNA double-strand breaks (DSBs), it is ubiquitinated through 'Lys-63' linkage of ubiquitin moieties. Post-translationally, phosphorylation on Ser-2 (H2AS1ph) is enhanced during mitosis. Phosphorylation on Ser-2 by RPS6KA5/MSK1 directly represses transcription. Acetylation of H3 inhibits Ser-2 phosphorylation by RPS6KA5/MSK1. Phosphorylation at Thr-121 (H2AT120ph) by DCAF1 is present in the regulatory region of many tumor suppresor genes and down-regulates their transcription.

It localises to the nucleus. The protein localises to the chromosome. In terms of biological role, core component of nucleosome. Nucleosomes wrap and compact DNA into chromatin, limiting DNA accessibility to the cellular machineries which require DNA as a template. Histones thereby play a central role in transcription regulation, DNA repair, DNA replication and chromosomal stability. DNA accessibility is regulated via a complex set of post-translational modifications of histones, also called histone code, and nucleosome remodeling. This chain is Histone H2A.J, found in Bos taurus (Bovine).